A 418-amino-acid polypeptide reads, in one-letter code: Tyrosine--tRNA ligase 1 (418 aa).

Tyrosine 34 is a binding site for L-tyrosine. Residues 39–48 (PTGDSMHIGH) carry the 'HIGH' region motif. Tyrosine 166 and glutamine 170 together coordinate L-tyrosine. The 'KMSKS' region signature appears at 228–232 (KFGKT). Residue lysine 231 coordinates ATP. One can recognise an S4 RNA-binding domain in the interval 350-416 (KNIVDWLVDT…GKKNYFLAKV (67 aa)).

Belongs to the class-I aminoacyl-tRNA synthetase family. TyrS type 1 subfamily. In terms of assembly, homodimer.

The protein resides in the cytoplasm. The enzyme catalyses tRNA(Tyr) + L-tyrosine + ATP = L-tyrosyl-tRNA(Tyr) + AMP + diphosphate + H(+). Its function is as follows. Catalyzes the attachment of tyrosine to tRNA(Tyr) in a two-step reaction: tyrosine is first activated by ATP to form Tyr-AMP and then transferred to the acceptor end of tRNA(Tyr). This is Tyrosine--tRNA ligase 1 from Enterococcus faecalis (strain ATCC 700802 / V583).